A 282-amino-acid chain; its full sequence is ATP synthase gamma chain (282 aa).

This sequence belongs to the ATPase gamma chain family. In terms of assembly, F-type ATPases have 2 components, CF(1) - the catalytic core - and CF(0) - the membrane proton channel. CF(1) has five subunits: alpha(3), beta(3), gamma(1), delta(1), epsilon(1). CF(0) has three main subunits: a, b and c.

It is found in the cell membrane. In terms of biological role, produces ATP from ADP in the presence of a proton gradient across the membrane. The gamma chain is believed to be important in regulating ATPase activity and the flow of protons through the CF(0) complex. This is ATP synthase gamma chain from Clostridium botulinum (strain Langeland / NCTC 10281 / Type F).